The primary structure comprises 482 residues: ATP synthase subunit beta (482 aa).

168 to 175 is a binding site for ATP; sequence GGAGVGKT.

The protein belongs to the ATPase alpha/beta chains family. F-type ATPases have 2 components, CF(1) - the catalytic core - and CF(0) - the membrane proton channel. CF(1) has five subunits: alpha(3), beta(3), gamma(1), delta(1), epsilon(1). CF(0) has three main subunits: a(1), b(2) and c(9-12). The alpha and beta chains form an alternating ring which encloses part of the gamma chain. CF(1) is attached to CF(0) by a central stalk formed by the gamma and epsilon chains, while a peripheral stalk is formed by the delta and b chains.

It is found in the cell membrane. The enzyme catalyses ATP + H2O + 4 H(+)(in) = ADP + phosphate + 5 H(+)(out). Its function is as follows. Produces ATP from ADP in the presence of a proton gradient across the membrane. The catalytic sites are hosted primarily by the beta subunits. The protein is ATP synthase subunit beta of Corynebacterium urealyticum (strain ATCC 43042 / DSM 7109).